A 995-amino-acid polypeptide reads, in one-letter code: Polynucleotide 5'-hydroxyl-kinase NOL9 (995 aa).

Disordered regions lie at residues 18-173 (EQRE…SSMK) and 271-359 (IKVF…YEPP). Low complexity-rich tracts occupy residues 75–94 (TAGAKRPLSNNVSNPDSSPS) and 110–129 (VNKSSNVAAKKSAATSKSAK). The segment covering 279 to 354 (EETDSDEDDI…DIFDTDDLDS (76 aa)) has biased composition (acidic residues). An ATP-binding site is contributed by 639–646 (GGKGVGKS).

This sequence belongs to the Clp1 family. NOL9/GRC3 subfamily.

The protein resides in the nucleus. It localises to the nucleolus. In terms of biological role, polynucleotide 5'-kinase involved in rRNA processing. The protein is Polynucleotide 5'-hydroxyl-kinase NOL9 of Drosophila melanogaster (Fruit fly).